Here is a 190-residue protein sequence, read N- to C-terminus: CASP-like protein 1E1 (190 aa).

A disordered region spans residues 1 to 21 (MEHESKTKMDGIEMEKGKKEN). The Cytoplasmic segment spans residues 1-28 (MEHESKTKMDGIEMEKGKKENGSRKGVE). A helical membrane pass occupies residues 29-49 (ITMRVLALVLTMVAATVLGVA). At 50 to 83 (KQTEVVPIKLIPTLPPLNVATTAKASYLSAFVYN) the chain is on the extracellular side. A helical membrane pass occupies residues 84 to 104 (ICANAIACGYTAISIMIVIIS). The Cytoplasmic portion of the chain corresponds to 105–111 (KGRRSKC). The chain crosses the membrane as a helical span at residues 112–132 (LLMAVLIGDLMMVALLCSSTG). Residues 133-163 (AAGAIGLMGRHGNKHVMWKKVCGVFGKFCNQ) are Extracellular-facing. The helical transmembrane segment at 164 to 184 (AAVSVAITLIASVVFMLLVVL) threads the bilayer. Topologically, residues 185-190 (DALKLP) are cytoplasmic.

The protein belongs to the Casparian strip membrane proteins (CASP) family. Homodimer and heterodimers.

It localises to the cell membrane. This Arabidopsis lyrata subsp. lyrata (Lyre-leaved rock-cress) protein is CASP-like protein 1E1.